We begin with the raw amino-acid sequence, 689 residues long: Glycine--tRNA ligase beta subunit (689 aa).

This sequence belongs to the class-II aminoacyl-tRNA synthetase family. In terms of assembly, tetramer of two alpha and two beta subunits.

The protein resides in the cytoplasm. It carries out the reaction tRNA(Gly) + glycine + ATP = glycyl-tRNA(Gly) + AMP + diphosphate. The chain is Glycine--tRNA ligase beta subunit from Actinobacillus pleuropneumoniae serotype 3 (strain JL03).